A 372-amino-acid chain; its full sequence is tRNA pseudouridine synthase D (372 aa).

Residue Asp-85 is the Nucleophile of the active site. Positions Gly-160–Gly-330 constitute a TRUD domain.

This sequence belongs to the pseudouridine synthase TruD family.

The enzyme catalyses uridine(13) in tRNA = pseudouridine(13) in tRNA. Its function is as follows. Responsible for synthesis of pseudouridine from uracil-13 in transfer RNAs. The chain is tRNA pseudouridine synthase D from Campylobacter jejuni (strain RM1221).